Here is a 481-residue protein sequence, read N- to C-terminus: Guanine nucleotide exchange factor C9orf72 homolog (481 aa).

The 172-residue stretch at 23–194 (SPLLAATFAY…ELLASMRSHS (172 aa)) folds into the uDENN C9ORF72-type domain. The cDENN C9ORF72-type domain maps to 200–343 (DIADTVLNDD…SELTAFWRAT (144 aa)). In terms of domain architecture, dDENN C9ORF72-type spans 370 to 464 (VLHRDTLVKA…IKPGLHSFIF (95 aa)). The tract at residues 461-481 (SFIFGRPFYTSVQERDVLMTF) is required for the homodimerization of the C9orf72-SMCR8 complex.

In terms of assembly, component of the C9orf72-SMCR8 complex, at least composed of C9orf72, SMCR8 and WDR41. The complex is formed of two protomers, each individually consisting of one molecule each of C9orf72, SMCR8 and WDR41. The protomers homodimerize via an interaction between C9orf72 (via C-terminus) and SMCR8 (via N-terminus). Within each protomer SMCR8 (via DENN domain) acts as a bridging protein between WDR41 (via C-terminus and N-terminus) and C9orf72 (via C-terminus). The C9orf72-SMCR8 complex associates with the ULK1/ATG1 kinase complex. Interacts with ULK1/ATG1 kinase complex members ULK1, ATG13 and RB1CC1. Interacts with SMCR8; the interaction is direct. Interacts with HNRNPA1, HNRNPA2B1 and UBQLN2. Interacts with small Rab GTPase RAB1A; the interaction mediates recruitment of RAB1A to the ULK1/ATG1 kinase complex. Also interacts with small Rab GTPase RAB7A. Interacts with cofilin. Interacts with GTP-binding proteins ARF1 and ARF6. Interacts with the DLG4/PSD-95. Interacts with CARM1 (via PH domain-like fold). Interacts with RAB39A and RAB39B (in GDP-bound forms); functions as GEF for RAB39A and RAB39B.

The protein localises to the nucleus. Its subcellular location is the cytoplasm. It localises to the P-body. The protein resides in the stress granule. It is found in the endosome. The protein localises to the lysosome. Its subcellular location is the cytoplasmic vesicle. It localises to the autophagosome. The protein resides in the autolysosome. It is found in the secreted. The protein localises to the cell projection. Its subcellular location is the axon. It localises to the growth cone. The protein resides in the perikaryon. Its function is as follows. Acts as a guanine-nucleotide releasing factor (GEF) for Rab GTPases by promoting the conversion of inactive RAB-GDP to the active form RAB-GTP. Acts as a GEF for RAB39A which enables HOPS-mediated autophagosome-lysosome membrane tethering and fusion in mammalian autophagy. Component of the C9orf72-SMCR8 complex where both subunits display GEF activity and that regulates autophagy. As part of the C9orf72-SMCR8-WDR41 (CSW) complex, functions as GEF for RAB8A and RAB39B, thereby promoting autophagosome maturation. As part of the C9orf72-SMCR8 complex, also functions as GTPase activating protein (GAP) for RAB8A and RAB11A in vitro. The C9orf72-SMCR8 complex also acts as a regulator of autophagy initiation by interacting with the ULK1/ATG1 kinase complex and modulating its protein kinase activity. Promotes initiation of autophagy by regulating the RAB1A-dependent trafficking of the ULK1/ATG1 kinase complex to the phagophore which leads to autophagosome formation. Acts as a regulator of mTORC1 signaling by promoting phosphorylation of mTORC1 substrates. Plays a role in endosomal trafficking. May be involved in regulating the maturation of phagosomes to lysosomes. Promotes the lysosomal localization and lysosome-mediated degradation of CARM1 which leads to inhibition of starvation-induced lipid metabolism. Regulates actin dynamics in motor neurons by inhibiting the GTP-binding activity of ARF6, leading to ARF6 inactivation. This reduces the activity of the LIMK1 and LIMK2 kinases which are responsible for phosphorylation and inactivation of cofilin, leading to CFL1/cofilin activation. Positively regulates axon extension and axon growth cone size in spinal motor neurons. Required for SMCR8 protein expression and localization at pre- and post-synaptic compartments in the forebrain, also regulates protein abundance of RAB3A and GRIA1/GLUR1 in post-synaptic compartments in the forebrain and hippocampus. Plays a role within the hematopoietic system in restricting inflammation and the development of autoimmunity. This Rattus norvegicus (Rat) protein is Guanine nucleotide exchange factor C9orf72 homolog.